Consider the following 920-residue polypeptide: B3 domain-containing protein REM17 (920 aa).

DNA-binding regions (TF-B3) lie at residues 12-105 (NPHF…LGPS), 153-250 (RFVA…CRAK), and 267-361 (CFEG…LCPT). Disordered regions lie at residues 405-438 (DDDQ…SSFV), 540-562 (LACS…KNTS), and 585-614 (DDDQ…SSDH). Residues 423 to 432 (NPREKVESSS) are compositionally biased toward basic and acidic residues. A DNA-binding region (TF-B3 4) is located at residues 436–531 (SFVGSVNPSS…NKPVLSLCPT (96 aa)). 2 DNA-binding regions (TF-B3) span residues 616–714 (SFVA…SLSE) and 727–823 (YFVG…LCPA). A compositionally biased stretch (low complexity) spans 842–852 (NSLSSNPSSGD). Positions 842-870 (NSLSSNPSSGDDSSRSEESEEENMEDKNI) are disordered.

The protein resides in the nucleus. The protein is B3 domain-containing protein REM17 (REM17) of Arabidopsis thaliana (Mouse-ear cress).